We begin with the raw amino-acid sequence, 217 residues long: Probable rhamnogalacturonan acetylesterase YesY (217 aa).

Serine 11 functions as the Nucleophile in the catalytic mechanism. Catalysis depends on residues glutamate 178 and histidine 185.

The protein belongs to the 'GDSL' lipolytic enzyme family.

Its function is as follows. May play a role in the degradation of rhamnogalacturonan derived from plant cell walls. Probably has broad substrate specificity and may degrade several types of acetylated substrates. This Bacillus subtilis (strain 168) protein is Probable rhamnogalacturonan acetylesterase YesY (yesY).